A 238-amino-acid polypeptide reads, in one-letter code: Ribonuclease PH (238 aa).

Phosphate is bound by residues Arg-86 and 124 to 126 (GTR).

It belongs to the RNase PH family. In terms of assembly, homohexameric ring arranged as a trimer of dimers.

It catalyses the reaction tRNA(n+1) + phosphate = tRNA(n) + a ribonucleoside 5'-diphosphate. Its function is as follows. Phosphorolytic 3'-5' exoribonuclease that plays an important role in tRNA 3'-end maturation. Removes nucleotide residues following the 3'-CCA terminus of tRNAs; can also add nucleotides to the ends of RNA molecules by using nucleoside diphosphates as substrates, but this may not be physiologically important. Probably plays a role in initiation of 16S rRNA degradation (leading to ribosome degradation) during starvation. The protein is Ribonuclease PH of Aliivibrio fischeri (strain ATCC 700601 / ES114) (Vibrio fischeri).